The chain runs to 382 residues: Ribosomal RNA large subunit methyltransferase G (382 aa).

The protein belongs to the methyltransferase superfamily. RlmG family.

It is found in the cytoplasm. It catalyses the reaction guanosine(1835) in 23S rRNA + S-adenosyl-L-methionine = N(2)-methylguanosine(1835) in 23S rRNA + S-adenosyl-L-homocysteine + H(+). In terms of biological role, specifically methylates the guanine in position 1835 (m2G1835) of 23S rRNA. The chain is Ribosomal RNA large subunit methyltransferase G from Psychromonas ingrahamii (strain DSM 17664 / CCUG 51855 / 37).